Reading from the N-terminus, the 200-residue chain is ATP-dependent Clp protease proteolytic subunit 3 (200 aa).

S101 functions as the Nucleophile in the catalytic mechanism. H126 is an active-site residue.

This sequence belongs to the peptidase S14 family. Fourteen ClpP subunits assemble into 2 heptameric rings which stack back to back to give a disk-like structure with a central cavity, resembling the structure of eukaryotic proteasomes.

It localises to the cytoplasm. The catalysed reaction is Hydrolysis of proteins to small peptides in the presence of ATP and magnesium. alpha-casein is the usual test substrate. In the absence of ATP, only oligopeptides shorter than five residues are hydrolyzed (such as succinyl-Leu-Tyr-|-NHMec, and Leu-Tyr-Leu-|-Tyr-Trp, in which cleavage of the -Tyr-|-Leu- and -Tyr-|-Trp bonds also occurs).. Functionally, cleaves peptides in various proteins in a process that requires ATP hydrolysis. Has a chymotrypsin-like activity. Plays a major role in the degradation of misfolded proteins. This chain is ATP-dependent Clp protease proteolytic subunit 3, found in Parasynechococcus marenigrum (strain WH8102).